The following is an 826-amino-acid chain: Prominin-1-A (826 aa).

Helical transmembrane passes span 50–70 (YYEPGAIGILFNMMHAFLFVV), 106–126 (VVCAALGLLFTVLLPLVGLLF), and 153–173 (LLTTLLLTTTFIITAGVLCAY). Asn-178, Asn-268, Asn-286, Asn-327, Asn-388, and Asn-404 each carry an N-linked (GlcNAc...) asparagine glycan. A run of 2 helical transmembrane segments spans residues 439–459 (CMIVLILTFNFLGLLCGILGF) and 483–503 (VGFSFLFSWVLMGVITALFLA). Asn-576, Asn-582, Asn-617, and Asn-693 each carry an N-linked (GlcNAc...) asparagine glycan.

Belongs to the prominin family.

Its subcellular location is the apical cell membrane. The protein localises to the cell projection. It localises to the microvillus membrane. The protein resides in the endoplasmic reticulum. It is found in the endoplasmic reticulum-Golgi intermediate compartment. May play a role in cell differentiation, proliferation and apoptosis. Binds cholesterol in cholesterol-containing plasma membrane microdomains and may play a role in the organization of the apical plasma membrane in epithelial cells. Involved in regulation of MAPK and Akt signaling pathways. The sequence is that of Prominin-1-A (prom1a) from Danio rerio (Zebrafish).